The sequence spans 424 residues: MAKQIQAIRGMNDILPTQSPLWQKVEAVLRSSVSAYGYSEIRTPIVESTDLFKRSIGEVTDIVEKEMYTFEDRNSDSLTLRPEGTASTVRAGNEHGLLYNQEQRLWYMGPMFRHERPQKGRYRQFHQFGVEVYGIGTADIDAEVLMLSARLWQQLGIDEHVSLELNTLGDPSERAAYRDALIAFLEQHKDKLDEDSQRRMYSNPLRVLDTKDSQVQALLADAPALMDYLGEESKTHFSTLCELLDAVGIQYRVNPRLVRGLDYYNRTVFEWVTTSLGSQGTVLAGGRYDGLVGQLGGKDTPAVGFAMGLERIVLLLETLGLNQDIAPEVDVYVTAMGDSCLVEAFKVAQELRQALPGLKVMSHCGGGNVKKQMKRADKSGAAYAIIIGENELANNQVAIKPLRNNNQQELVARDALAETISALI.

Belongs to the class-II aminoacyl-tRNA synthetase family. In terms of assembly, homodimer.

It localises to the cytoplasm. The catalysed reaction is tRNA(His) + L-histidine + ATP = L-histidyl-tRNA(His) + AMP + diphosphate + H(+). This chain is Histidine--tRNA ligase, found in Shewanella denitrificans (strain OS217 / ATCC BAA-1090 / DSM 15013).